Reading from the N-terminus, the 217-residue chain is tRNA 5-hydroxyuridine methyltransferase (217 aa).

S-adenosyl-L-methionine-binding positions include M38, S68, E85, 113-114, and D133; that span reads DA. Mg(2+) is bound by residues D133, D159, and N160.

This sequence belongs to the class I-like SAM-binding methyltransferase superfamily. Cation-dependent O-methyltransferase family. Homodimer.

It carries out the reaction 5-hydroxyuridine(34) in tRNA + S-adenosyl-L-methionine = 5-methoxyuridine(34) in tRNA + S-adenosyl-L-homocysteine + H(+). Its function is as follows. Catalyzes the methylation of 5-hydroxyuridine (ho5U) to form 5-methoxyuridine (mo5U) at position 34 in tRNAs. The protein is tRNA 5-hydroxyuridine methyltransferase of Bacillus subtilis (strain 168).